Consider the following 130-residue polypeptide: Small ribosomal subunit protein uS11c (130 aa).

This sequence belongs to the universal ribosomal protein uS11 family. In terms of assembly, part of the 30S ribosomal subunit.

The protein resides in the plastid. It localises to the chloroplast. This is Small ribosomal subunit protein uS11c from Trieres chinensis (Marine centric diatom).